The sequence spans 197 residues: MAKKEVVKIAKLQFIAGQAKPGPSLAGVGINMPEFTRQFNEQTRDRGNEPVPVEITAYKDKSFDFRLFTAPASFKILQAIKAKSGSANSKTNIIGTLTLAQLEEIAKYKLPDLNTDDYKVAMHTIAGTAKNMGVLVEGWDDVKKAKEEAKAAKLAQLKAEAKEAALKEAEKELVDSKGKEVEVKLVGEEEQSESENN.

The protein belongs to the universal ribosomal protein uL11 family. Part of the ribosomal stalk of the 50S ribosomal subunit. Interacts with L10 and the large rRNA to form the base of the stalk. L10 forms an elongated spine to which L12 dimers bind in a sequential fashion forming a multimeric L10(L12)X complex. In terms of processing, one or more lysine residues are methylated.

Its function is as follows. Forms part of the ribosomal stalk which helps the ribosome interact with GTP-bound translation factors. The sequence is that of Large ribosomal subunit protein uL11 from Mycoplasmopsis pulmonis (strain UAB CTIP) (Mycoplasma pulmonis).